The chain runs to 107 residues: Thioredoxin (107 aa).

Residues 2-107 form the Thioredoxin domain; sequence SEVLHINDAD…QLANFINQHI (106 aa). Cysteines 32 and 35 form a disulfide.

Belongs to the thioredoxin family.

Functionally, participates in various redox reactions through the reversible oxidation of its active center dithiol to a disulfide and catalyzes dithiol-disulfide exchange reactions. In Haemophilus influenzae (strain ATCC 51907 / DSM 11121 / KW20 / Rd), this protein is Thioredoxin (trxA).